Consider the following 520-residue polypeptide: Sensory neuron membrane protein 2 (520 aa).

The Cytoplasmic portion of the chain corresponds to 1 to 7 (MLGKHSK). The helical transmembrane segment at 8-28 (IFFGVSLIFLVIAIVLASWGF) threads the bilayer. Residues 29 to 468 (QKIVNKQIQK…DSHKLLGYVE (440 aa)) lie on the Extracellular side of the membrane. 7 N-linked (GlcNAc...) asparagine glycosylation sites follow: Asn-44, Asn-67, Asn-104, Asn-228, Asn-271, Asn-313, and Asn-342. 3 disulfides stabilise this stretch: Cys-267/Cys-337, Cys-298/Cys-361, and Cys-339/Cys-350. The helical transmembrane segment at 469–489 (VAKWFLLTIAIISVIASAVAV) threads the bilayer. At 490–520 (ARANALLSWPRNSNSVSFILGPSVTQVNKGN) the chain is on the cytoplasmic side.

The protein belongs to the CD36 family. As to expression, localizes to cells surrounding the sensory neurons in the antenna. Associate in a ratio of 2:1 with the neurons expressing the other subtype SNMP1.

It is found in the cell membrane. In terms of biological role, plays an olfactory role that is not restricted to pheromone sensitivity. May play a role in the elimination of lipophilic components from the sensillum lymph. The protein is Sensory neuron membrane protein 2 of Heliothis virescens (Tobacco budworm moth).